A 732-amino-acid chain; its full sequence is Iron-sulfur clusters transporter ATM1, mitochondrial (732 aa).

The N-terminal 55 residues, Met1 to Gly55, are a transit peptide targeting the mitochondrion. The Mitochondrial matrix segment spans residues Gln56 to Val143. Positions Ser71–Glu114 are disordered. Residues Arg85 to Ser95 are compositionally biased toward low complexity. Polar residues predominate over residues Lys96 to Glu114. The chain crosses the membrane as a helical span at residues Ile144 to Phe164. The ABC transmembrane type-1 domain occupies Ile144–Gln432. Residues Lys165–Val181 are Mitochondrial intermembrane-facing. Residues Trp182–Phe202 traverse the membrane as a helical segment. The Mitochondrial matrix portion of the chain corresponds to Gly203–Ser262. A helical membrane pass occupies residues Ile263 to Trp283. A topological domain (mitochondrial intermembrane) is located at residue Lys284. The helical transmembrane segment at Phe285 to Ile305 threads the bilayer. Residues Lys306–Asn378 lie on the Mitochondrial matrix side of the membrane. Glutathione contacts are provided by residues Arg311 to Arg315 and Asn374 to Gln377. The helical transmembrane segment at Phe379–Gly399 threads the bilayer. Topologically, residues Thr400–Asp405 are mitochondrial intermembrane. The chain crosses the membrane as a helical span at residues Leu406–Val426. Gly424 contacts glutathione. Over Tyr427–Gln732 the chain is Mitochondrial matrix. An ABC transporter domain is found at Ile466–Gln702. ATP contacts are provided by residues Tyr475 and Gly499–Ser506. Positions Ser708–Gln732 are disordered. Residues Glu717 to Gln732 are compositionally biased toward basic and acidic residues.

This sequence belongs to the ABC transporter superfamily. ABCB family. Heavy Metal importer (TC 3.A.1.210) subfamily. In terms of assembly, homodimer.

It localises to the mitochondrion inner membrane. Its function is as follows. Performs an essential function in the generation of cytoplasmic iron-sulfur proteins by mediating the ATP-dependent export of mitochondrial Fe/S cluster precursors synthesized by NFS1 and other mitochondrial proteins. Hydrolyzes ATP. Binds glutathione and may function by transporting a glutathione-conjugated iron-sulfur compound. Plays a role during copper stress, in a manner dependent on the copper metalloregulatory transcription factor CUF1. The protein is Iron-sulfur clusters transporter ATM1, mitochondrial of Cryptococcus neoformans var. grubii serotype A (strain H99 / ATCC 208821 / CBS 10515 / FGSC 9487) (Filobasidiella neoformans var. grubii).